Here is a 522-residue protein sequence, read N- to C-terminus: Peptide chain release factor 3 (522 aa).

The tr-type G domain maps to 10–277; that stretch reads ASRKTFAIIS…TFVDFAPAPS (268 aa). GTP contacts are provided by residues 19–26, 87–91, and 141–144; these read SHPDAGKT, DTPGH, and NKMD.

This sequence belongs to the TRAFAC class translation factor GTPase superfamily. Classic translation factor GTPase family. PrfC subfamily.

The protein resides in the cytoplasm. In terms of biological role, increases the formation of ribosomal termination complexes and stimulates activities of RF-1 and RF-2. It binds guanine nucleotides and has strong preference for UGA stop codons. It may interact directly with the ribosome. The stimulation of RF-1 and RF-2 is significantly reduced by GTP and GDP, but not by GMP. In Listeria welshimeri serovar 6b (strain ATCC 35897 / DSM 20650 / CCUG 15529 / CIP 8149 / NCTC 11857 / SLCC 5334 / V8), this protein is Peptide chain release factor 3.